Here is a 361-residue protein sequence, read N- to C-terminus: tRNA-specific 2-thiouridylase MnmA (361 aa).

Residues 8 to 15 and Met34 each bind ATP; that span reads GMSGGVDS. Residues 94–96 are interaction with target base in tRNA; that stretch reads NPD. The active-site Nucleophile is Cys99. Cys99 and Cys195 are joined by a disulfide. Gly123 contributes to the ATP binding site. Residues 145–147 are interaction with tRNA; sequence KDQ. Cys195 serves as the catalytic Cysteine persulfide intermediate. The interaction with tRNA stretch occupies residues 307–308; that stretch reads RY.

It belongs to the MnmA/TRMU family.

It is found in the cytoplasm. The enzyme catalyses S-sulfanyl-L-cysteinyl-[protein] + uridine(34) in tRNA + AH2 + ATP = 2-thiouridine(34) in tRNA + L-cysteinyl-[protein] + A + AMP + diphosphate + H(+). Catalyzes the 2-thiolation of uridine at the wobble position (U34) of tRNA, leading to the formation of s(2)U34. The protein is tRNA-specific 2-thiouridylase MnmA of Legionella pneumophila (strain Paris).